The sequence spans 107 residues: MSASLKNQQGFSLPEVMLAMVLMVMIVTALSGFQRTLMNSLASRNQYQQLWRHGWQQTQLRAISPPANWQVNRMQTSQAGCVSISVTLVSPGGREGEMTRLHCPNRQ.

Residues 1-10 (MSASLKNQQG) constitute a propeptide that is removed on maturation. An N-methylphenylalanine modification is found at Phe-11. Residues 11 to 30 (FSLPEVMLAMVLMVMIVTAL) traverse the membrane as a helical segment.

It is found in the membrane. Not yet known. The sequence is that of Prepilin peptidase-dependent protein C (ppdC) from Escherichia coli (strain K12).